The chain runs to 1353 residues: Protein timeless homolog (1353 aa).

3 disordered regions span residues 798 to 825, 1150 to 1291, and 1306 to 1335; these read VAED…EEEV, KPTR…LEED, and GGSI…DPFT. Residues 802-825 show a composition bias toward acidic residues; that stretch reads RAEDPDEEDPAEPYDSEQEEEEEV. Composition is skewed to basic and acidic residues over residues 1150–1160 and 1168–1182; these read KPTRQVERHLE and ERSK…KFDD. 2 stretches are compositionally biased toward acidic residues: residues 1183–1206 and 1217–1226; these read FLND…EEEE and DSEDEEEHIE. Residues 1227–1239 show a composition bias toward basic and acidic residues; sequence QEEAQKKLEKVAE. Acidic residues-rich tracts occupy residues 1261 to 1273, 1282 to 1291, and 1323 to 1332; these read DSSD…DSAE, AEDDSDLEED, and EEREDDDDED.

The protein belongs to the timeless family. As to quaternary structure, associates with the cohesin complex. Interacts with smc-1, smc-3, scc-1 and scc-3.

It localises to the nucleus. Its function is as follows. Plays an important role in chromosome cohesion during both mitosis and meiosis. In prophase of meiosis, it is involved in the formation of the synaptonemal complex (SC) and specifically, in the diplotene and diakinesis phases of prophase, it stabilizes the association of homologous chromosomes during synapsis and sister chromatid cohesion. It regulates cohesin subunits to promote meiotic chromosome cohesion and localizes non-SMC (structural maintenance of chromosome) cohesin subunits to chromatin prior to or during pre-meiotic S phase. Implicated in influencing either the stability or loading of meiotic-specific cohesin subunit, rec8. Controls cell cycle exit and cell fusion to prevent the premature differentiation into adult cells. Specifically, regulates hypodermal seam cell identity. The chain is Protein timeless homolog from Caenorhabditis elegans.